The sequence spans 269 residues: Bis(5'-nucleosyl)-tetraphosphatase, symmetrical (269 aa).

Belongs to the Ap4A hydrolase family.

It carries out the reaction P(1),P(4)-bis(5'-adenosyl) tetraphosphate + H2O = 2 ADP + 2 H(+). In terms of biological role, hydrolyzes diadenosine 5',5'''-P1,P4-tetraphosphate to yield ADP. The sequence is that of Bis(5'-nucleosyl)-tetraphosphatase, symmetrical from Vibrio vulnificus (strain CMCP6).